Here is a 180-residue protein sequence, read N- to C-terminus: tRNA (cytidine(56)-2'-O)-methyltransferase (180 aa).

Residue Leu-85 participates in S-adenosyl-L-methionine binding.

This sequence belongs to the aTrm56 family. Homodimer.

The protein localises to the cytoplasm. It carries out the reaction cytidine(56) in tRNA + S-adenosyl-L-methionine = 2'-O-methylcytidine(56) in tRNA + S-adenosyl-L-homocysteine + H(+). Functionally, specifically catalyzes the AdoMet-dependent 2'-O-ribose methylation of cytidine at position 56 in tRNAs. The chain is tRNA (cytidine(56)-2'-O)-methyltransferase from Methanobrevibacter smithii (strain ATCC 35061 / DSM 861 / OCM 144 / PS).